Reading from the N-terminus, the 858-residue chain is Neural cell adhesion molecule 1 (858 aa).

A signal peptide spans 1 to 19; that stretch reads MLQTKDLIWTLFFLGTAVS. Ig-like C2-type domains follow at residues 20–111, 116–205, 212–301, 308–413, and 416–501; these read LQVD…ATVN, QKLM…KDIQ, PTIQ…ATIH, PKIT…LEVQ, and PKLQ…ESLE. Residues 20–718 are Extracellular-facing; it reads LQVDIVPSQG…IPANGSPTSG (699 aa). Intrachain disulfides connect C41–C96 and C139–C189. N222 carries N-linked (GlcNAc...) asparagine glycosylation. Residues C235 and C287 are joined by a disulfide bond. Residues N315, N347, N433, N459, and N488 are each glycosylated (N-linked (GlcNAc...) asparagine). Cysteines 329 and 395 form a disulfide. C436 and C489 are joined by a disulfide. Fibronectin type-III domains follow at residues 509–608 and 611–706; these read TPSS…TQPV and EPSA…SAQP. P706 carries the GPI-anchor amidated asparagine lipid modification. The helical transmembrane segment at 719–739 threads the bilayer; it reads LSTGAIVGILIVIFVLLLVVV. At 740–858 the chain is on the cytoplasmic side; sequence DITCYFLNKC…TQTKENESKA (119 aa). A lipid anchor (GPI-anchor amidated asparagine) is attached at I741. The interval 766–858 is disordered; that stretch reads GAKGKDMEEG…TQTKENESKA (93 aa). 2 stretches are compositionally biased toward basic and acidic residues: residues 768–809 and 817–834; these read KGKD…HTEP and EPEK…ETET. S780 and S784 each carry phosphoserine.

(Microbial infection) Interacts with rabies virus glycoprotein. In terms of assembly, (Microbial infection) Interacts with Zika virus envelope protein E. As to quaternary structure, interacts with MDK. Found in a complex with SLC39A6, SLC39A10 and with NCAM1; this complex controls NCAM1 phosphorylation and integration into focal adhesion complexes during epithelial-tomesenchymal transition. Interacts with synaptic plasticity regulator PANTS. In terms of processing, polysialylated at Asn-459 and Asn-488 by ST8SIA2 and ST8SIA4. Polysialylation modulates cell interactions by confering both attractive and repulsive properties that are highly regulated by ST8SIA2 and ST8SIA4. Polysialylation is formed on a-2,3-linked sialic acid of core glycans.

The protein localises to the cell membrane. It is found in the secreted. In terms of biological role, this protein is a cell adhesion molecule involved in neuron-neuron adhesion, neurite fasciculation, outgrowth of neurites, etc. (Microbial infection) Acts as a receptor for rabies virus. Its function is as follows. (Microbial infection) Acts as a receptor for Zika virus. This chain is Neural cell adhesion molecule 1, found in Homo sapiens (Human).